We begin with the raw amino-acid sequence, 170 residues long: 4-hydroxyphenylacetate 3-monooxygenase reductase component (170 aa).

Belongs to the non-flavoprotein flavin reductase family. HpaC subfamily. As to quaternary structure, homodimer. 4-HPA 3-monooxygenase consists of a reductase component HpaC and an oxygenase component HpaB.

It carries out the reaction a reduced flavin + NAD(+) = an oxidized flavin + NADH + 2 H(+). Its pathway is aromatic compound metabolism; 4-hydroxyphenylacetate degradation; pyruvate and succinate semialdehyde from 4-hydroxyphenylacetate: step 1/7. Its function is as follows. Catalyzes the reduction of free flavins (FMN, FAD and riboflavin) by NADH. Subsequently, the reduced flavins diffuse to the large HpaB component or to other electron acceptors such as cytochrome c and Fe(3+) ion. This Salmonella typhimurium (strain LT2 / SGSC1412 / ATCC 700720) protein is 4-hydroxyphenylacetate 3-monooxygenase reductase component (hpaC).